The following is a 142-amino-acid chain: Trafficking protein particle complex subunit 1 (142 aa).

Belongs to the TRAPP small subunits family. BET5 subfamily. As to quaternary structure, part of the multisubunit TRAPP (transport protein particle) complex.

The protein localises to the golgi apparatus. It localises to the cis-Golgi network. Its subcellular location is the endoplasmic reticulum. Functionally, may play a role in vesicular transport from endoplasmic reticulum to Golgi. This chain is Trafficking protein particle complex subunit 1 (trappc1-1), found in Dictyostelium discoideum (Social amoeba).